A 231-amino-acid polypeptide reads, in one-letter code: Large ribosomal subunit protein uL1 (231 aa).

This sequence belongs to the universal ribosomal protein uL1 family. As to quaternary structure, part of the 50S ribosomal subunit.

In terms of biological role, binds directly to 23S rRNA. The L1 stalk is quite mobile in the ribosome, and is involved in E site tRNA release. Protein L1 is also a translational repressor protein, it controls the translation of the L11 operon by binding to its mRNA. In Beijerinckia indica subsp. indica (strain ATCC 9039 / DSM 1715 / NCIMB 8712), this protein is Large ribosomal subunit protein uL1.